The chain runs to 95 residues: ATP-dependent Clp protease adapter protein ClpS (95 aa).

This sequence belongs to the ClpS family. As to quaternary structure, binds to the N-terminal domain of the chaperone ClpA.

Involved in the modulation of the specificity of the ClpAP-mediated ATP-dependent protein degradation. This is ATP-dependent Clp protease adapter protein ClpS from Synechococcus elongatus (strain ATCC 33912 / PCC 7942 / FACHB-805) (Anacystis nidulans R2).